The chain runs to 614 residues: 1-deoxy-D-xylulose-5-phosphate synthase (614 aa).

Residues H76 and 117 to 119 each bind thiamine diphosphate; that span reads GHS. D148 contacts Mg(2+). Thiamine diphosphate is bound by residues 149-150, N177, Y285, and E366; that span reads GA. N177 serves as a coordination point for Mg(2+).

This sequence belongs to the transketolase family. DXPS subfamily. In terms of assembly, homodimer. It depends on Mg(2+) as a cofactor. The cofactor is thiamine diphosphate.

It catalyses the reaction D-glyceraldehyde 3-phosphate + pyruvate + H(+) = 1-deoxy-D-xylulose 5-phosphate + CO2. The protein operates within metabolic intermediate biosynthesis; 1-deoxy-D-xylulose 5-phosphate biosynthesis; 1-deoxy-D-xylulose 5-phosphate from D-glyceraldehyde 3-phosphate and pyruvate: step 1/1. Functionally, catalyzes the acyloin condensation reaction between C atoms 2 and 3 of pyruvate and glyceraldehyde 3-phosphate to yield 1-deoxy-D-xylulose-5-phosphate (DXP). This chain is 1-deoxy-D-xylulose-5-phosphate synthase, found in Pasteurella multocida (strain Pm70).